The following is a 222-amino-acid chain: UPF0502 protein Shewmr7_1629 (222 aa).

The protein belongs to the UPF0502 family.

This Shewanella sp. (strain MR-7) protein is UPF0502 protein Shewmr7_1629.